Consider the following 87-residue polypeptide: Small ribosomal subunit protein uS19m (87 aa).

It belongs to the universal ribosomal protein uS19 family.

Its subcellular location is the mitochondrion. The chain is Small ribosomal subunit protein uS19m (mrps19) from Dictyostelium citrinum (Slime mold).